Here is a 469-residue protein sequence, read N- to C-terminus: UDP-N-acetylmuramate--L-alanine ligase (469 aa).

119–125 (GTHGKTT) contacts ATP.

The protein belongs to the MurCDEF family.

The protein localises to the cytoplasm. The enzyme catalyses UDP-N-acetyl-alpha-D-muramate + L-alanine + ATP = UDP-N-acetyl-alpha-D-muramoyl-L-alanine + ADP + phosphate + H(+). It participates in cell wall biogenesis; peptidoglycan biosynthesis. In terms of biological role, cell wall formation. The protein is UDP-N-acetylmuramate--L-alanine ligase of Ruthia magnifica subsp. Calyptogena magnifica.